Reading from the N-terminus, the 191-residue chain is Large ribosomal subunit protein bL9 (191 aa).

Residues 150 to 191 (EAERQAKGESLTSADAIYGVDEDALRPEDFFDPDADRDGDDE) are disordered. The span at 179-191 (FFDPDADRDGDDE) shows a compositional bias: acidic residues.

The protein belongs to the bacterial ribosomal protein bL9 family.

In terms of biological role, binds to the 23S rRNA. The sequence is that of Large ribosomal subunit protein bL9 from Allorhizobium ampelinum (strain ATCC BAA-846 / DSM 112012 / S4) (Agrobacterium vitis (strain S4)).